Here is a 156-residue protein sequence, read N- to C-terminus: 6,7-dimethyl-8-ribityllumazine synthase (156 aa).

5-amino-6-(D-ribitylamino)uracil-binding positions include phenylalanine 22, 57 to 59 (AYE), and 81 to 83 (TVI). Residue 86 to 87 (GT) participates in (2S)-2-hydroxy-3-oxobutyl phosphate binding. Residue histidine 89 is the Proton donor of the active site. Position 114 (phenylalanine 114) interacts with 5-amino-6-(D-ribitylamino)uracil. (2S)-2-hydroxy-3-oxobutyl phosphate is bound at residue arginine 128.

It belongs to the DMRL synthase family. Forms an icosahedral capsid composed of 60 subunits, arranged as a dodecamer of pentamers.

It carries out the reaction (2S)-2-hydroxy-3-oxobutyl phosphate + 5-amino-6-(D-ribitylamino)uracil = 6,7-dimethyl-8-(1-D-ribityl)lumazine + phosphate + 2 H2O + H(+). It participates in cofactor biosynthesis; riboflavin biosynthesis; riboflavin from 2-hydroxy-3-oxobutyl phosphate and 5-amino-6-(D-ribitylamino)uracil: step 1/2. In terms of biological role, catalyzes the formation of 6,7-dimethyl-8-ribityllumazine by condensation of 5-amino-6-(D-ribitylamino)uracil with 3,4-dihydroxy-2-butanone 4-phosphate. This is the penultimate step in the biosynthesis of riboflavin. The sequence is that of 6,7-dimethyl-8-ribityllumazine synthase from Yersinia pseudotuberculosis serotype O:1b (strain IP 31758).